A 201-amino-acid polypeptide reads, in one-letter code: Dimethylsulfoniopropionate lyase DddQ (201 aa).

Residues H130, E134, Y136, and H169 each coordinate a divalent metal cation.

Belongs to the non-heme iron-dependent dioxygenase family. As to quaternary structure, homodimer. Requires a divalent metal cation as cofactor.

The catalysed reaction is S,S-dimethyl-beta-propiothetin = acrylate + dimethyl sulfide + H(+). In terms of biological role, may act as a dimethylsulfoniopropionate (DMSP) in vitro, releasing dimethyl sulfide (DMS). DMS is the principal form by which sulfur is transported from oceans to the atmosphere. The real activity of the protein is however subject to debate and it is unclear whether it constitutes a real dimethylsulfoniopropionate lyase in vivo. This chain is Dimethylsulfoniopropionate lyase DddQ, found in Ruegeria pomeroyi (strain ATCC 700808 / DSM 15171 / DSS-3) (Silicibacter pomeroyi).